The sequence spans 175 residues: Protein-export protein SecB (175 aa).

The span at 153–163 shows a compositional bias: polar residues; the sequence is QQQPDAANGND. Residues 153–175 form a disordered region; that stretch reads QQQPDAANGNDSGIILPPGATRQ.

It belongs to the SecB family. As to quaternary structure, homotetramer, a dimer of dimers. One homotetramer interacts with 1 SecA dimer.

The protein resides in the cytoplasm. In terms of biological role, one of the proteins required for the normal export of preproteins out of the cell cytoplasm. It is a molecular chaperone that binds to a subset of precursor proteins, maintaining them in a translocation-competent state. It also specifically binds to its receptor SecA. This chain is Protein-export protein SecB, found in Bordetella bronchiseptica (strain ATCC BAA-588 / NCTC 13252 / RB50) (Alcaligenes bronchisepticus).